Here is a 224-residue protein sequence, read N- to C-terminus: Heme response regulator HssR (224 aa).

A Response regulatory domain is found at 3 to 116 (NCLIVDDDKK…ELLFRIKAVL (114 aa)). 4-aspartylphosphate is present on D52. Positions 124–222 (DNELQLGNLI…VRGQGYRVDQ (99 aa)) form a DNA-binding region, ompR/PhoB-type.

In terms of processing, phosphorylated by HssS.

The protein resides in the cytoplasm. Member of the two-component regulatory system HssS/HssR involved in intracellular heme homeostasis and tempering of staphylococcal virulence. Phosphorylated HssR binds to a direct repeat sequence within hrtAB promoter and activates the expression of hrtAB, an efflux pump, in response to extracellular heme, hemin, hemoglobin or blood. In Staphylococcus epidermidis (strain ATCC 12228 / FDA PCI 1200), this protein is Heme response regulator HssR (hssR).